Reading from the N-terminus, the 145-residue chain is Transcriptional regulator MraZ (145 aa).

2 consecutive SpoVT-AbrB domains span residues 5-50 and 81-124; these read TFNH…ALPQ and AHEV…DRAA.

Belongs to the MraZ family. Forms oligomers.

The protein localises to the cytoplasm. It is found in the nucleoid. This chain is Transcriptional regulator MraZ, found in Anaeromyxobacter dehalogenans (strain 2CP-1 / ATCC BAA-258).